Here is a 150-residue protein sequence, read N- to C-terminus: MQVILLDKVANLGSLGDQVNVKAGYARNFLVPQGKAVPATKKNVEFFEARRAELEAKLADVLAAAEARATKINELVSVTISSKAGDEGKLFGSIGTRDIADAVTAAGVEVAKSEVRLPNGVLRTAGEHEVHFQVHSDVFAKLNVVVVPEA.

It belongs to the bacterial ribosomal protein bL9 family.

In terms of biological role, binds to the 23S rRNA. This chain is Large ribosomal subunit protein bL9, found in Yersinia pseudotuberculosis serotype I (strain IP32953).